The primary structure comprises 69 residues: DNA gyrase inhibitor YacG (69 aa).

Positions 14, 17, 33, and 37 each coordinate Zn(2+). Residues 46 to 69 (ADEEKSIPGAPDMSDSDGWSEDQY) are disordered. Residues 59-69 (SDSDGWSEDQY) show a composition bias toward acidic residues.

It belongs to the DNA gyrase inhibitor YacG family. Interacts with GyrB. The cofactor is Zn(2+).

Its function is as follows. Inhibits all the catalytic activities of DNA gyrase by preventing its interaction with DNA. Acts by binding directly to the C-terminal domain of GyrB, which probably disrupts DNA binding by the gyrase. This chain is DNA gyrase inhibitor YacG, found in Aliivibrio fischeri (strain MJ11) (Vibrio fischeri).